Consider the following 234-residue polypeptide: Segregation and condensation protein A (234 aa).

The protein belongs to the ScpA family. As to quaternary structure, component of a cohesin-like complex composed of ScpA, ScpB and the Smc homodimer, in which ScpA and ScpB bind to the head domain of Smc. The presence of the three proteins is required for the association of the complex with DNA.

The protein localises to the cytoplasm. Functionally, participates in chromosomal partition during cell division. May act via the formation of a condensin-like complex containing Smc and ScpB that pull DNA away from mid-cell into both cell halves. The protein is Segregation and condensation protein A of Streptococcus pyogenes serotype M5 (strain Manfredo).